The following is a 302-amino-acid chain: Zinc finger protein-like 1 homolog (302 aa).

Residues 1–43 form a B box-type; degenerate zinc finger; it reads MGLCKCPKRLVTNQFCFEHRVNVCEHCMVQSHPKCIVQSYLQW. The RING-type; atypical zinc-finger motif lies at 53 to 101; sequence CNLCGTSLEQGECVRLVCYHVFHWDCLNARQAALPANTAPRGHQCPGCS. Residues 168–233 are disordered; the sequence is IHSGGERERG…RDDNKYQRRT (66 aa). Over residues 198–208 the composition is skewed to polar residues; it reads PPSSGDFNASS. S217 carries the phosphoserine modification. A helical transmembrane segment spans residues 258-278; sequence WFLVLSGILAFVMFIYLLAWM.

The protein belongs to the ZFPL1 family.

It is found in the membrane. This chain is Zinc finger protein-like 1 homolog, found in Drosophila pseudoobscura pseudoobscura (Fruit fly).